The following is a 921-amino-acid chain: AdoMet-dependent rRNA methyltransferase SPB1 (921 aa).

Residues Gly-58, Trp-60, Asp-78, Asp-94, and Asp-119 each contribute to the S-adenosyl-L-methionine site. The Proton acceptor role is filled by Lys-159. Residues 367–414 (VEEMDEDDQIDDELARLNEEAARKARKERRRKNELRQKKILKMQLQMT) adopt a coiled-coil conformation. Disordered regions lie at residues 448–476 (ALIQ…DPET), 491–604 (EFKQ…KRSL), 635–713 (ELDE…GKQK), 814–835 (LEKA…EKEK), and 866–921 (RGLK…GPRN). Residues 491 to 522 (EFKQKQSERDAKFRAKQARLQDAKNDSWHGIK) are compositionally biased toward basic and acidic residues. Acidic residues-rich tracts occupy residues 523-542 (DDEE…ESEG), 555-568 (ETFD…EEDE), 635-684 (ELDE…DDFE), and 697-708 (DEEWDLNGEDEE). Positions 796–835 (IKKVAEAKARKKMRTLRRLEKAQKKAETINENEDISEKEK) form a coiled coil. Residues 814-823 (LEKAQKKAET) show a composition bias toward basic and acidic residues. Positions 868 to 879 (LKGRPKGTKGRY) are enriched in basic residues. Residues 880-892 (KMVDPRMKKELRA) are compositionally biased toward basic and acidic residues.

Belongs to the class I-like SAM-binding methyltransferase superfamily. RNA methyltransferase RlmE family. SPB1 subfamily. As to quaternary structure, component of the nucleolar and nucleoplasmic pre-60S ribosomal particle.

The protein resides in the nucleus. It localises to the nucleolus. It carries out the reaction a ribonucleotide in rRNA + S-adenosyl-L-methionine = a 2'-O-methylribonucleotide in rRNA + S-adenosyl-L-homocysteine + H(+). Required for proper assembly of pre-ribosomal particles during the biogenesis of the 60S ribosomal subunit. The protein is AdoMet-dependent rRNA methyltransferase SPB1 of Mycosarcoma maydis (Corn smut fungus).